The chain runs to 349 residues: Putative methylesterase 12, chloroplastic (349 aa).

The N-terminal 77 residues, 1 to 77, are a transit peptide targeting the chloroplast; the sequence is MGNRVICMKK…GSTSSRRGTL (77 aa). The interval 61–80 is disordered; sequence GSMSRRIGSTSSRRGTLSDS. Catalysis depends on serine 173, which acts as the Acyl-ester intermediate. Active-site charge relay system residues include aspartate 300 and histidine 328.

This sequence belongs to the AB hydrolase superfamily. Methylesterase family.

It is found in the plastid. The protein resides in the chloroplast. Its function is as follows. Putative methylesterase. The chain is Putative methylesterase 12, chloroplastic from Arabidopsis thaliana (Mouse-ear cress).